Here is an 80-residue protein sequence, read N- to C-terminus: MEEREGGFRKETVERLLRLHFRDGRTRVNGDALLLMAELLKVFVREAAARAARQAQAEDLEKVDIEHVEKVLPQLLLDFV.

It belongs to the CENP-X/MHF2 family. As to quaternary structure, heterodimer with CENPX, sometimes called MHF; this interaction stabilizes both partners. MHF heterodimers can assemble to form tetrameric structures. MHF also coassemble with CENPT-CENPW heterodimers at centromeres to form the tetrameric CENP-T-W-S-X complex. Forms a discrete complex with FANCM and CENPX, called FANCM-MHF; this interaction, probably mediated by direct binding between CENPS and FANCM, leads to synergistic activation of double-stranded DNA binding and strongly stimulates FANCM-mediated DNA remodeling. Recruited by FANCM to the Fanconi anemia (FA) core complex, which consists of CENPS, CENPX, FANCA, FANCB, FANCC, FANCE, FANCF, FANCG, FANCL, FANCM, FAAP24 and FAAP100. The FA core complex associates with Bloom syndrome (BLM) complex, which consists of at least BLM, DNA topoisomerase 3-alpha (TOP3A), RMI1/BLAP75, RPA1/RPA70 and RPA2/RPA32. The super complex between FA and BLM is called BRAFT.

It localises to the nucleus. It is found in the chromosome. Its subcellular location is the centromere. The protein resides in the kinetochore. DNA-binding component of the Fanconi anemia (FA) core complex. Required for the normal activation of the FA pathway, leading to monoubiquitination of the FANCI-FANCD2 complex in response to DNA damage, cellular resistance to DNA cross-linking drugs, and prevention of chromosomal breakage. In complex with CENPS (MHF heterodimer), crucial cofactor for FANCM in both binding and ATP-dependent remodeling of DNA. Stabilizes FANCM. In complex with CENPS and FANCM (but not other FANC proteins), rapidly recruited to blocked forks and promotes gene conversion at blocked replication forks. In complex with CENPS, CENPT and CENPW (CENP-T-W-S-X heterotetramer), involved in the formation of a functional kinetochore outer plate, which is essential for kinetochore-microtubule attachment and faithful mitotic progression. As a component of MHF and CENP-T-W-S-X complexes, binds DNA and bends it to form a nucleosome-like structure. DNA-binding function is fulfilled in the presence of CENPS, with the following preference for DNA substates: Holliday junction &gt; double-stranded &gt; splay arm &gt; single-stranded. Does not bind DNA on its own. The chain is Centromere protein X (CENPX) from Gallus gallus (Chicken).